Consider the following 145-residue polypeptide: MNFKYIVAVSFLIASAYARSVQNDEQSLSQRDVLEEEESLREIRGIGGKILSGLKTALKGAAKELASTYLHRKRTAEEHEVMKRLEAVMRDLDSLDYPEEAAERETRGFNQDEIANLFTKKEKRILGPVLGLVGNALGGLIKKIG.

Residues 1-18 (MNFKYIVAVSFLIASAYA) form the signal peptide. Propeptides lie at residues 19 to 43 (RSVQ…LREI) and 74 to 124 (RTAE…KEKR). Ile-144 carries the post-translational modification Isoleucine amide.

The protein belongs to the bombinin family. As to expression, expressed by the skin glands.

The protein resides in the secreted. Its function is as follows. Maximin-3 shows antibacterial activity against both Gram-positive and Gram-negative bacteria. It also shows antimicrobial activity against the fungus C.albicans, but not against A.flavus nor P.uticale. It has little hemolytic activity. It possess a significant cytotoxicity against tumor cell lines. It possess a significant anti-HIV activity. It shows high spermicidal activity. Functionally, maximin-H3 shows antibacterial activity against both Gram-positive and Gram-negative bacteria. It also shows antimicrobial activity against the fungus C.albicans. Shows strong hemolytic activity. The polypeptide is Maximins 3/H3 type 2 (Bombina maxima (Giant fire-bellied toad)).